We begin with the raw amino-acid sequence, 520 residues long: ATP-dependent RNA helicase CshA (520 aa).

The short motif at Thr2 to Glu30 is the Q motif element. The region spanning Ile33–Ile203 is the Helicase ATP-binding domain. Ala46 to Thr53 provides a ligand contact to ATP. The DEAD box motif lies at Asp151–Asp154. The Helicase C-terminal domain occupies Leu214–Ala374. Basic and acidic residues predominate over residues Lys428–Leu439. The segment at Lys428–Lys520 is disordered. 2 stretches are compositionally biased toward gly residues: residues Arg442 to Gly468 and Ser482 to Gly496.

It belongs to the DEAD box helicase family. CshA subfamily. Oligomerizes, may be a member of the RNA degradosome.

Its subcellular location is the cytoplasm. It catalyses the reaction ATP + H2O = ADP + phosphate + H(+). Functionally, DEAD-box RNA helicase possibly involved in RNA degradation. Unwinds dsRNA in both 5'- and 3'-directions, has RNA-dependent ATPase activity. Involved in cold tolerance, motility and alcohol tolerance. The polypeptide is ATP-dependent RNA helicase CshA (Listeria monocytogenes serovar 1/2a (strain ATCC BAA-679 / EGD-e)).